We begin with the raw amino-acid sequence, 134 residues long: Lymphocyte antigen 6A-2/6E-1 (134 aa).

Residues 1–26 (MDTSHTTKSCLLILLVALLCAERAQG) form the signal peptide. Positions 27–119 (LECYQCYGVP…NGGSTWTMAG (93 aa)) constitute a UPAR/Ly6 domain. 5 cysteine pairs are disulfide-bonded: cysteine 29–cysteine 53, cysteine 32–cysteine 41, cysteine 46–cysteine 74, cysteine 78–cysteine 98, and cysteine 99–cysteine 104. Glycine 112 is lipidated: GPI-anchor amidated glycine. Residues 113–134 (STWTMAGVLLFSLSSVLLQTLL) constitute a propeptide, removed in mature form.

Post-translationally, O-glycosylated. Not N-glycosylated. Not phosphorylated. In terms of tissue distribution, widely expressed.

It is found in the cell membrane. Its function is as follows. T-cell activation. The polypeptide is Lymphocyte antigen 6A-2/6E-1 (Ly6a) (Mus musculus (Mouse)).